Here is a 414-residue protein sequence, read N- to C-terminus: Tryptophan synthase beta chain (414 aa).

Over residues 1-26 the composition is skewed to basic and acidic residues; sequence MVSTFSRKDQNYKNDDLNQPSKEGRF. Positions 1 to 27 are disordered; the sequence is MVSTFSRKDQNYKNDDLNQPSKEGRFG. Lysine 109 carries the post-translational modification N6-(pyridoxal phosphate)lysine.

This sequence belongs to the TrpB family. In terms of assembly, tetramer of two alpha and two beta chains. It depends on pyridoxal 5'-phosphate as a cofactor.

The enzyme catalyses (1S,2R)-1-C-(indol-3-yl)glycerol 3-phosphate + L-serine = D-glyceraldehyde 3-phosphate + L-tryptophan + H2O. It participates in amino-acid biosynthesis; L-tryptophan biosynthesis; L-tryptophan from chorismate: step 5/5. Functionally, the beta subunit is responsible for the synthesis of L-tryptophan from indole and L-serine. In Prochlorococcus marinus (strain MIT 9301), this protein is Tryptophan synthase beta chain.